The primary structure comprises 356 residues: Sorbitol dehydrogenase (356 aa).

Residue C44 participates in Zn(2+) binding. Y50 contacts substrate. The Zn(2+) site is built by H69 and E70. E155 provides a ligand contact to substrate. The NAD(+) site is built by I183, D203, and R208. A phosphoserine mark is found at S210 and S224. Residues 272–274 (VGL) and 296–298 (VFR) contribute to the NAD(+) site. Positions 298 and 299 each coordinate substrate.

It belongs to the zinc-containing alcohol dehydrogenase family. Homotetramer. It depends on Zn(2+) as a cofactor. As to expression, expressed in lens.

The protein localises to the mitochondrion membrane. Its subcellular location is the cell projection. The protein resides in the cilium. It localises to the flagellum. The catalysed reaction is xylitol + NAD(+) = D-xylulose + NADH + H(+). It carries out the reaction keto-D-fructose + NADH + H(+) = D-sorbitol + NAD(+). The enzyme catalyses L-iditol + NAD(+) = keto-L-sorbose + NADH + H(+). Its activity is regulated as follows. Inhibited in vitro by metal chelators such as EDTA and 1,10-phenanthroline. Polyol dehydrogenase that catalyzes the reversible NAD(+)-dependent oxidation of various sugar alcohols. Is mostly active with xylitol, D-sorbitol (D-glucitol) and L-iditol as substrates, leading to the C2-oxidized products D-xylulose, D-fructose and L-sorbose, respectively. Is a key enzyme in the polyol pathway that interconverts glucose and fructose via sorbitol, which constitutes an important alternate route for glucose metabolism. May play a role in sperm motility by using sorbitol as an alternative energy source for sperm motility. Cannot use NADP(+) as the electron acceptor. Has no activity on ethanol, methanol, glycerol, galactitol and fructose 6-phosphate. This chain is Sorbitol dehydrogenase (SORD), found in Bos taurus (Bovine).